The chain runs to 83 residues: Exodeoxyribonuclease 7 small subunit (83 aa).

The protein belongs to the XseB family. In terms of assembly, heterooligomer composed of large and small subunits.

It localises to the cytoplasm. The enzyme catalyses Exonucleolytic cleavage in either 5'- to 3'- or 3'- to 5'-direction to yield nucleoside 5'-phosphates.. Functionally, bidirectionally degrades single-stranded DNA into large acid-insoluble oligonucleotides, which are then degraded further into small acid-soluble oligonucleotides. This Allorhizobium ampelinum (strain ATCC BAA-846 / DSM 112012 / S4) (Agrobacterium vitis (strain S4)) protein is Exodeoxyribonuclease 7 small subunit.